Here is a 366-residue protein sequence, read N- to C-terminus: NAD(P)H-quinone oxidoreductase subunit 1, chloroplastic (366 aa).

Transmembrane regions (helical) follow at residues 29–49, 97–117, 130–150, 166–186, 202–222, 254–274, 307–327, and 340–360; these read WITA…LVIV, LLFS…YLVI, IGVF…FMAG, VAQA…ISLL, FGFW…FLIA, FGLF…FVTV, VIIG…ISIV, and LLNL…LLTA.

Belongs to the complex I subunit 1 family. In terms of assembly, NDH is composed of at least 16 different subunits, 5 of which are encoded in the nucleus.

Its subcellular location is the plastid. It is found in the chloroplast thylakoid membrane. It catalyses the reaction a plastoquinone + NADH + (n+1) H(+)(in) = a plastoquinol + NAD(+) + n H(+)(out). The enzyme catalyses a plastoquinone + NADPH + (n+1) H(+)(in) = a plastoquinol + NADP(+) + n H(+)(out). Functionally, NDH shuttles electrons from NAD(P)H:plastoquinone, via FMN and iron-sulfur (Fe-S) centers, to quinones in the photosynthetic chain and possibly in a chloroplast respiratory chain. The immediate electron acceptor for the enzyme in this species is believed to be plastoquinone. Couples the redox reaction to proton translocation, and thus conserves the redox energy in a proton gradient. In Anthoceros angustus (Hornwort), this protein is NAD(P)H-quinone oxidoreductase subunit 1, chloroplastic.